A 497-amino-acid polypeptide reads, in one-letter code: MGMASMSSGTESLRLCVFDLRRGQHEGQELDKILFFYPPDLTFSTQLSVIGLSEGLITFTRLFSPEAACEVIEAERHSHVFYEAEPDIWMVMIVEKNKEIEAVWRIDALRRVLKEVHSLFVMFQGSIRALLEKEPTGGLVRSHLYPFITDYLNDLFVGKKQQLPSFRDTLKERGTVQMLTLARDAALEVQSLVGVLDSCAGTVRCHSVILFHDLLVSTTLSPDDTVDLFAFSVMRLTTNALSSGTSSWSYLRKGSGSPQISSRSTTVPPLGSGGTLPSGNGSSTGRVIRPLQHDKWSKGKDGFLVTDIWGLDATPTILIQKTQESFYLLTYQYKSLTLVLLVPIAAIVNGELDISFVKQQVIENASTKILKVEEKLSKGWGGENAYHVSGYRYLLVDNDMEVSRASPPGKVATLAKESLLALNKLREEVDTEKNRSKQEKDMEICIRAKNNTWVIARLNRGKELYMALEKASETLLDATDSVQRFSNRYCSGAFPMD.

A disordered region spans residues 244 to 284; that stretch reads GTSSWSYLRKGSGSPQISSRSTTVPPLGSGGTLPSGNGSST.

This sequence belongs to the CCZ1 family. As to quaternary structure, interacts with MON1.

The protein localises to the endosome. Its subcellular location is the prevacuolar compartment. Its function is as follows. Plays an important role in membrane trafficking through the secretory apparatus. In complex with MON1, acts as a guanine exchange factor (GEF) for RABG3F of the RAB7 protein family. Promotes the exchange of GDP to GTP, converting RABG3F from an inactive GDP-bound form into an active GTP-bound form. The RABG3F active form is involved in protein trafficking from prevacuolar compartments (PVCs) to vacuoles. May serve as a linker between Rab5 and Rab7 protein families in PVCs and mediate PVC maturation. This Arabidopsis thaliana (Mouse-ear cress) protein is Vacuolar fusion protein CCZ1 homolog B.